A 303-amino-acid polypeptide reads, in one-letter code: tRNA (guanine-N(7)-)-methyltransferase (303 aa).

A disordered region spans residues 1–64 (MPKPHQVQVI…STSDKISLPR (64 aa)). Residues 10–38 (IKDRETQLREQQEAESKRRTYRDVKEETR) show a composition bias toward basic and acidic residues. S-adenosyl-L-methionine is bound by residues Gly118, 141-142 (EI), 177-178 (NA), and Cys197. The active site involves Asp200. 275-277 (TEE) contributes to the S-adenosyl-L-methionine binding site.

The protein belongs to the class I-like SAM-binding methyltransferase superfamily. TrmB family. As to quaternary structure, forms a complex with TRM82.

It is found in the nucleus. The catalysed reaction is guanosine(46) in tRNA + S-adenosyl-L-methionine = N(7)-methylguanosine(46) in tRNA + S-adenosyl-L-homocysteine. The protein operates within tRNA modification; N(7)-methylguanine-tRNA biosynthesis. Its function is as follows. Catalyzes the formation of N(7)-methylguanine at position 46 (m7G46) in tRNA. In Scheffersomyces stipitis (strain ATCC 58785 / CBS 6054 / NBRC 10063 / NRRL Y-11545) (Yeast), this protein is tRNA (guanine-N(7)-)-methyltransferase.